The primary structure comprises 407 residues: Tryptophan synthase beta chain (407 aa).

The residue at position 91 (K91) is an N6-(pyridoxal phosphate)lysine.

The protein belongs to the TrpB family. In terms of assembly, tetramer of two alpha and two beta chains. Pyridoxal 5'-phosphate serves as cofactor.

The enzyme catalyses (1S,2R)-1-C-(indol-3-yl)glycerol 3-phosphate + L-serine = D-glyceraldehyde 3-phosphate + L-tryptophan + H2O. It participates in amino-acid biosynthesis; L-tryptophan biosynthesis; L-tryptophan from chorismate: step 5/5. The beta subunit is responsible for the synthesis of L-tryptophan from indole and L-serine. The chain is Tryptophan synthase beta chain from Streptococcus pneumoniae (strain Hungary19A-6).